Here is a 544-residue protein sequence, read N- to C-terminus: Probable protein kinase UbiB (544 aa).

The Protein kinase domain maps to 123-501; that stretch reads DFDLVPLASA…KRQQATGKFL (379 aa). Residues 129–137 and Lys-152 each bind ATP; that span reads LASASIAQV. Catalysis depends on Asp-287, which acts as the Proton acceptor. Transmembrane regions (helical) follow at residues 496 to 516 and 519 to 539; these read ATGKFLFGVGATLVVCSAILV and TYEQLSLATAIAGVTFWLFSW.

It belongs to the ABC1 family. UbiB subfamily.

The protein localises to the cell inner membrane. The protein operates within cofactor biosynthesis; ubiquinone biosynthesis [regulation]. Is probably a protein kinase regulator of UbiI activity which is involved in aerobic coenzyme Q (ubiquinone) biosynthesis. The protein is Probable protein kinase UbiB of Vibrio vulnificus (strain CMCP6).